We begin with the raw amino-acid sequence, 548 residues long: Natural resistance-associated macrophage protein 1 (548 aa).

The span at 1 to 12 shows a compositional bias: polar residues; sequence MSGDTGTPNQGG. A disordered region spans residues 1-38; the sequence is MSGDTGTPNQGGTRYGSISSPPSPGPQQAPPGGTYLSE. At 1–55 the chain is on the cytoplasmic side; it reads MSGDTGTPNQGGTRYGSISSPPSPGPQQAPPGGTYLSEKIPIPDTESGAFSLRKL. The helical transmembrane segment at 56–73 threads the bilayer; it reads WAFTGPGFLMSIAFLDPG. The Extracellular segment spans residues 74–82; it reads NIESDLQAG. A helical membrane pass occupies residues 83–102; that stretch reads AVAGFKLLWVLLWATVLGLL. Over 103–139 the chain is Cytoplasmic; that stretch reads CQRLAARLGVVTGKDLGEVCHLYYPKVPRTLLWLTIE. Residues 140–160 traverse the membrane as a helical segment; that stretch reads LAIVGSDMQEVIGTAIAFSLL. Over 161 to 164 the chain is Extracellular; the sequence is SAGR. A helical transmembrane segment spans residues 165–184; sequence IPLWGGVLITIVDTFFFLFL. At 185-193 the chain is on the cytoplasmic side; the sequence is DNYGLRKLE. Residues 194–214 form a helical membrane-spanning segment; it reads AFFGFLITIMALTFGYEYVVA. At 215 to 237 the chain is on the extracellular side; it reads RPAQGALLQGLFLPSCPGCGQPE. Residues 238 to 256 traverse the membrane as a helical segment; the sequence is LLQAVGIVGAIIMPHNIYL. Residues 257 to 284 are Cytoplasmic-facing; it reads HSSLVKSREVDRSRRADIREANMYFLIE. A helical membrane pass occupies residues 285–304; that stretch reads ATIALSVSFFINLFVMAVFG. The Extracellular portion of the chain corresponds to 305–346; the sequence is QAFYKQTNQAAFNICANSSLHDYATIFPRDNLTVAVDIYQGG. 2 N-linked (GlcNAc...) asparagine glycosylation sites follow: Asn321 and Asn335. A helical membrane pass occupies residues 347 to 366; sequence VILGCLFGPAALYIWAVGLL. Residues 367–397 lie on the Cytoplasmic side of the membrane; the sequence is AAGQSSTMTGTYAGQFVMEGFLKLRWSRFAR. A helical membrane pass occupies residues 398–415; it reads VLLTRSCAIPPTVLLAVF. Topologically, residues 416–426 are extracellular; the sequence is RDLQDLSGLND. The chain crosses the membrane as a helical span at residues 427–447; it reads LLNVLQSLLLPFAVLPILTFT. Residues 448–463 are Cytoplasmic-facing; the sequence is SMPALMQEFANGLVSK. A helical membrane pass occupies residues 464–485; that stretch reads IITSSIMVLVCAVNLYFVISYV. Residues 486–493 lie on the Extracellular side of the membrane; that stretch reads PSLPHPAY. A helical transmembrane segment spans residues 494–513; it reads FSLVALLAAAYLGLTTYLVW. The Cytoplasmic segment spans residues 514–548; that stretch reads TCLITQGATRLAHSSHQRFLYGLPGEDQEEGRTSG.

Belongs to the NRAMP family.

The protein localises to the late endosome membrane. It localises to the lysosome membrane. The enzyme catalyses Zn(2+)(in) + H(+)(out) = Zn(2+)(out) + H(+)(in). The catalysed reaction is Fe(2+)(in) + H(+)(out) = Fe(2+)(out) + H(+)(in). It catalyses the reaction Mn(2+)(in) + H(+)(out) = Mn(2+)(out) + H(+)(in). Its function is as follows. Macrophage-specific antiporter that fluxes metal ions in either direction against a proton gradient. Localized to late endosomal lysosomal membranes, delivers bivalent cations from the cytosol into these acidic compartments where they may directly affect antimicrobial activity. Involved in iron metabolism and host natural resistance to infection with intracellular parasites. Pathogen resistance involves sequestration of Fe(2+) and Mn(2+), cofactors of both prokaryotic and eukaryotic catalases and superoxide dismutases, not only to protect the macrophage against its own generation of reactive oxygen species, but to deny the cations to the pathogen for synthesis of its protective enzymes. The protein is Natural resistance-associated macrophage protein 1 (SLC11A1) of Ovis aries (Sheep).